The following is a 461-amino-acid chain: Photosystem II CP43 reaction center protein (461 aa).

The propeptide occupies 1 to 2; sequence ME. Residue Thr3 is modified to N-acetylthreonine. A Phosphothreonine modification is found at Thr3. 5 consecutive transmembrane segments (helical) span residues 57–81, 122–143, 166–188, 243–263, and 279–300; these read LFEV…PHIA, LIGP…KDKN, KAMY…RIIS, KPWG…LSYS, and WFNN…ASQA. [CaMn4O5] cluster is bound at residue Glu355. Residues 435-459 form a helical membrane-spanning segment; it reads RARAAAAGFEKGIDRDTEPVLSMKP.

Belongs to the PsbB/PsbC family. PsbC subfamily. In terms of assembly, PSII is composed of 1 copy each of membrane proteins PsbA, PsbB, PsbC, PsbD, PsbE, PsbF, PsbH, PsbI, PsbJ, PsbK, PsbL, PsbM, PsbT, PsbX, PsbY, PsbZ, Psb30/Ycf12, at least 3 peripheral proteins of the oxygen-evolving complex and a large number of cofactors. It forms dimeric complexes. Binds multiple chlorophylls and provides some of the ligands for the Ca-4Mn-5O cluster of the oxygen-evolving complex. It may also provide a ligand for a Cl- that is required for oxygen evolution. PSII binds additional chlorophylls, carotenoids and specific lipids. serves as cofactor.

The protein resides in the plastid. Its subcellular location is the chloroplast thylakoid membrane. One of the components of the core complex of photosystem II (PSII). It binds chlorophyll and helps catalyze the primary light-induced photochemical processes of PSII. PSII is a light-driven water:plastoquinone oxidoreductase, using light energy to abstract electrons from H(2)O, generating O(2) and a proton gradient subsequently used for ATP formation. The protein is Photosystem II CP43 reaction center protein of Oltmannsiellopsis viridis (Marine flagellate).